A 457-amino-acid chain; its full sequence is Cystathionine beta-lyase, chloroplastic (457 aa).

The transit peptide at 1 to 51 (MFSRPFVTPVTIDLQVKSITAGNMWEGLGFYKPANSKSNQMICSKGFRLNC) directs the protein to the chloroplast. Residues Tyr-120, Arg-122, Gly-150, Met-151, Ser-268, and Thr-270 each contribute to the pyridoxal 5'-phosphate site. Residue Lys-271 is modified to N6-(pyridoxal phosphate)lysine.

It belongs to the trans-sulfuration enzymes family. Forms homodimers. May form homotetramers from two homodimers. Pyridoxal 5'-phosphate is required as a cofactor.

Its subcellular location is the plastid. The protein resides in the chloroplast. It catalyses the reaction L,L-cystathionine + H2O = L-homocysteine + pyruvate + NH4(+). The enzyme catalyses an S-substituted L-cysteine + H2O = a thiol + pyruvate + NH4(+). Its function is as follows. Catalyzes the degradation of cystathionine. This chain is Cystathionine beta-lyase, chloroplastic, found in Mimosa pudica (Sensitive plant).